The chain runs to 215 residues: Ribosomal RNA small subunit methyltransferase G (215 aa).

Residues Gly73, Leu78, 125–126, and Arg140 contribute to the S-adenosyl-L-methionine site; that span reads AE.

Belongs to the methyltransferase superfamily. RNA methyltransferase RsmG family.

It is found in the cytoplasm. Its function is as follows. Specifically methylates the N7 position of guanine in position 518 of 16S rRNA. This is Ribosomal RNA small subunit methyltransferase G from Renibacterium salmoninarum (strain ATCC 33209 / DSM 20767 / JCM 11484 / NBRC 15589 / NCIMB 2235).